The primary structure comprises 479 residues: Ribulose bisphosphate carboxylase large chain (479 aa).

The propeptide occupies 1–2; sequence MS. Substrate is bound by residues Asn-123 and Thr-173. The active-site Proton acceptor is Lys-175. Lys-177 is a substrate binding site. Mg(2+)-binding residues include Lys-201, Asp-203, and Glu-204. Lys-201 is modified (N6-carboxylysine). Residue Ser-208 is modified to Phosphoserine. His-294 (proton acceptor) is an active-site residue. Positions 295 and 327 each coordinate substrate. Thr-330 carries the phosphothreonine modification. Ser-379 provides a ligand contact to substrate.

Belongs to the RuBisCO large chain family. Type I subfamily. Heterohexadecamer of 8 large chains and 8 small chains; disulfide-linked. The disulfide link is formed within the large subunit homodimers. Requires Mg(2+) as cofactor. The disulfide bond which can form in the large chain dimeric partners within the hexadecamer appears to be associated with oxidative stress and protein turnover.

Its subcellular location is the plastid. It is found in the chloroplast. It catalyses the reaction 2 (2R)-3-phosphoglycerate + 2 H(+) = D-ribulose 1,5-bisphosphate + CO2 + H2O. It carries out the reaction D-ribulose 1,5-bisphosphate + O2 = 2-phosphoglycolate + (2R)-3-phosphoglycerate + 2 H(+). Functionally, ruBisCO catalyzes two reactions: the carboxylation of D-ribulose 1,5-bisphosphate, the primary event in carbon dioxide fixation, as well as the oxidative fragmentation of the pentose substrate in the photorespiration process. Both reactions occur simultaneously and in competition at the same active site. In Nasturtium officinale (Watercress), this protein is Ribulose bisphosphate carboxylase large chain.